The primary structure comprises 99 residues: Putative GIY-YIG domain-containing protein 242L (99 aa).

Positions 5–81 (NGWNIYMVTM…KKQTKKVKLQ (77 aa)) constitute a GIY-YIG domain.

The sequence is that of Putative GIY-YIG domain-containing protein 242L from Invertebrate iridescent virus 6 (IIV-6).